We begin with the raw amino-acid sequence, 451 residues long: Exodeoxyribonuclease 7 large subunit (451 aa).

Belongs to the XseA family. Heterooligomer composed of large and small subunits.

The protein localises to the cytoplasm. It catalyses the reaction Exonucleolytic cleavage in either 5'- to 3'- or 3'- to 5'-direction to yield nucleoside 5'-phosphates.. In terms of biological role, bidirectionally degrades single-stranded DNA into large acid-insoluble oligonucleotides, which are then degraded further into small acid-soluble oligonucleotides. The protein is Exodeoxyribonuclease 7 large subunit of Neisseria meningitidis serogroup C / serotype 2a (strain ATCC 700532 / DSM 15464 / FAM18).